Consider the following 389-residue polypeptide: NADH-dependent butanol dehydrogenase A (389 aa).

The protein belongs to the iron-containing alcohol dehydrogenase family. In terms of assembly, homodimer.

Its pathway is alcohol metabolism; butanol biosynthesis. This Clostridium acetobutylicum (strain ATCC 824 / DSM 792 / JCM 1419 / IAM 19013 / LMG 5710 / NBRC 13948 / NRRL B-527 / VKM B-1787 / 2291 / W) protein is NADH-dependent butanol dehydrogenase A (bdhA).